A 258-amino-acid chain; its full sequence is Phosphoadenosine 5'-phosphosulfate reductase (258 aa).

Cys-244 (nucleophile; cysteine thiosulfonate intermediate) is an active-site residue.

This sequence belongs to the PAPS reductase family. CysH subfamily.

The protein localises to the cytoplasm. It catalyses the reaction [thioredoxin]-disulfide + sulfite + adenosine 3',5'-bisphosphate + 2 H(+) = [thioredoxin]-dithiol + 3'-phosphoadenylyl sulfate. It participates in sulfur metabolism; hydrogen sulfide biosynthesis; sulfite from sulfate: step 3/3. Its function is as follows. Catalyzes the formation of sulfite from phosphoadenosine 5'-phosphosulfate (PAPS) using thioredoxin as an electron donor. The protein is Phosphoadenosine 5'-phosphosulfate reductase of Vibrio atlanticus (strain LGP32) (Vibrio splendidus (strain Mel32)).